The sequence spans 1719 residues: Sodium channel protein type 4 subunit alpha B (1719 aa).

The Cytoplasmic segment spans residues 1 to 126 (MRTLLPPVGS…IVAIKILIHS (126 aa)). The disordered stretch occupies residues 28–50 (QQIREEERKRTNAQVSEELPEPA). An I repeat occupies 108-431 (LLSPFNALRI…VVAMAYAEQN (324 aa)). Residues 127-145 (LFSLFIMATILTNCAFMTL) form a helical membrane-spanning segment. Topologically, residues 146 to 152 (SDPPAWS) are extracellular. Residues 153–173 (KTMEYVFTFIYTFEATIKILS) form a helical membrane-spanning segment. At 174–187 (RGFCVGKFTFLKDP) the chain is on the cytoplasmic side. The helical transmembrane segment at 188-205 (WNWLDFMVISMAYLTELV) threads the bilayer. Residues 206–211 (DLGNVS) lie on the Extracellular side of the membrane. Asn209 is a glycosylation site (N-linked (GlcNAc...) asparagine). A helical membrane pass occupies residues 212 to 228 (VLRTFRVLRALKTITVI). At 229–247 (PGLKTIVGALIQSVRKLAD) the chain is on the cytoplasmic side. The chain crosses the membrane as a helical span at residues 248–267 (AMVLTVFCLSVFALIGLQLF). Residues 268–368 (MGNLRQKCVL…PNYGYTSYDS (101 aa)) are Extracellular-facing. A disulfide bridge connects residues Cys275 and Cys337. 2 N-linked (GlcNAc...) asparagine glycosylation sites follow: Asn285 and Asn339. A disulfide bridge connects residues Cys346 and Cys352. The pore-forming intramembrane region spans 369 to 393 (FGWAFLALFRLMTQDFWENLFQLTL). Residues 394 to 400 (RTAGKTY) are Extracellular-facing. A helical membrane pass occupies residues 401 to 421 (MIFFVVVIFLGSFYLINLILA). Residues 422–513 (VVAMAYAEQN…ECLYAIVMDP (92 aa)) lie on the Cytoplasmic side of the membrane. An II repeat occupies 495 to 766 (CCGCWRHLKE…QIAINRINRA (272 aa)). The chain crosses the membrane as a helical span at residues 514–532 (FVDLGITICIILNTVFMAM). At 533–543 (EHYPMSADFEE) the chain is on the extracellular side. The helical transmembrane segment at 544-563 (LLSVGNLVFTGIFTGEMVFK) threads the bilayer. Over 564-577 (ILAMDPYFYFQVGW) the chain is Cytoplasmic. A helical transmembrane segment spans residues 578-597 (NIFDSIIVTISLVELGLANV). Topologically, residues 598-599 (QG) are extracellular. The helical transmembrane segment at 600-617 (LSVLRSFRLMRVFKLAKS) threads the bilayer. Residues 618 to 633 (WPTLNMLIKIIGNSVG) lie on the Cytoplasmic side of the membrane. The helical transmembrane segment at 634–652 (ALGNLTLVLAIIVFIFAVV) threads the bilayer. The Extracellular segment spans residues 653-681 (GMQLFGKNYKDCVCRISEDCVLPRWHMND). An intrachain disulfide couples Cys666 to Cys672. Positions 682–702 (FFHAFLIIFRVLCGEWIESMW) form an intramembrane region, pore-forming. Topologically, residues 703–713 (DCMEVSGQTMC) are extracellular. A disulfide bridge links Cys704 with Cys713. Residues 714-732 (LIVFMMVLVIGNLVVLNLF) form a helical membrane-spanning segment. The Cytoplasmic portion of the chain corresponds to 733–919 (LALLLSSFSG…TCFSIVENNY (187 aa)). Acidic residues predominate over residues 834–845 (SDSDDSDYDEDK). The segment at 834–862 (SDSDDSDYDEDKDSQCDESSVCSSVQKPE) is disordered. One copy of the III repeat lies at 900-1215 (RGKIWCNIRR…KKYYNAMKKL (316 aa)). The helical transmembrane segment at 920–937 (FESFIVFMILLSSGALAF) threads the bilayer. Topologically, residues 938 to 950 (EDIYLEKHQLIKS) are extracellular. Residues 951-969 (ILEYADKVFTYVFVMEMVL) form a helical membrane-spanning segment. The Cytoplasmic portion of the chain corresponds to 970 to 983 (KWFAYGFKSYFSNA). Residues 984-1002 (WCWLDFLIVDVSLVSLTAN) form a helical membrane-spanning segment. Topologically, residues 1003 to 1010 (ILGYSELG) are extracellular. A helical membrane pass occupies residues 1011 to 1029 (AIKSLRTLRALRPLRALSR). At 1030–1046 (FEGMRVVVNALVGAVPS) the chain is on the cytoplasmic side. Residues 1047 to 1066 (IFNVLLVCLIFWLIFSIMGV) form a helical membrane-spanning segment. Residues 1067-1119 (NLFAGKFSYCFNETSQEIIDTKVVDNKTECIALIKANFTEVRWKNVKVNYDNV) lie on the Extracellular side of the membrane. A disulfide bridge connects residues Cys1076 and Cys1096. 2 N-linked (GlcNAc...) asparagine glycosylation sites follow: Asn1078 and Asn1092. Positions 1120-1141 (GIGYLSLLQVATFKGWTDIMYA) form an intramembrane region, pore-forming. Topologically, residues 1142–1158 (AVDSRDVESQPIYEVNL) are extracellular. Residues 1159-1180 (YMYLYFVIFIIFGSFFTLNLFI) form a helical membrane-spanning segment. Topologically, residues 1181-1243 (GVIIDNFNQQ…LVFDLVTKQI (63 aa)) are cytoplasmic. The interval 1199-1201 (IFM) is important for rapid channel inactivation. The stretch at 1224–1521 (VPRPENPFQG…WEKFDPDASQ (298 aa)) is one IV repeat. A helical transmembrane segment spans residues 1244 to 1261 (FDVFIMVLICLNMVTMMV). At 1262-1272 (ETDEQSDKKEE) the chain is on the extracellular side. A helical membrane pass occupies residues 1273-1291 (VLYWINVVFILIFTTECTL). Topologically, residues 1292–1303 (KIIALRRHYFSI) are cytoplasmic. Residues 1304–1321 (GWNIFDFVVVILSILGLL) traverse the membrane as a helical segment. At 1322-1334 (LADIIEKYFVSPT) the chain is on the extracellular side. A helical transmembrane segment spans residues 1335–1351 (LFRVIRLARIGRVLRLI). Residues 1352–1370 (RGAKGIRTLLFALMMSLPA) lie on the Cytoplasmic side of the membrane. Residues 1371 to 1388 (LFNIGLLLFLIMFIFSIF) form a helical membrane-spanning segment. Residues 1389 to 1410 (GMSNFAYVKKEALIDDMFNFET) lie on the Extracellular side of the membrane. Residues 1411–1433 (FGNSMICLFMITTSAGWDGLLSP) constitute an intramembrane region (pore-forming). The Extracellular portion of the chain corresponds to 1434 to 1462 (IMNTPPDCDPNVENPGTTVRGNCGSPAIG). An intrachain disulfide couples Cys1441 to Cys1456. The helical transmembrane segment at 1463 to 1485 (IAFFSTYIIMSFLVVVNMFIAII) threads the bilayer. Topologically, residues 1486 to 1719 (LENFNVATEE…QERDQRETSV (234 aa)) are cytoplasmic. The IQ domain maps to 1615–1644 (EEVAATVIQRAYRKYLLLRTVRLASFMYRE).

It belongs to the sodium channel (TC 1.A.1.10) family. Nav1.4/SCN4A subfamily. Voltage-gated sodium (Nav) channels consist of an ion-conducting alpha subunit which is functional on its own associated with regulatory beta subunits.

Its subcellular location is the cell membrane. The catalysed reaction is Na(+)(in) = Na(+)(out). Pore-forming subunit of a voltage-gated sodium (Nav) channel that directly mediates the depolarizing phase of action potentials in excitable membranes. Navs, also called VGSCs (voltage-gated sodium channels) or VDSCs (voltage-dependent sodium channels), operate by switching between closed and open conformations depending on the voltage difference across the membrane. In the open conformation they allow Na(+) ions to selectively pass through the pore, along their electrochemical gradient. The influx of Na+ ions provokes membrane depolarization, initiating the propagation of electrical signals throughout cells and tissues. This Takifugu rubripes (Japanese pufferfish) protein is Sodium channel protein type 4 subunit alpha B (scn4ab).